Here is a 227-residue protein sequence, read N- to C-terminus: Pyridoxal 5'-phosphate synthase subunit PdxT (227 aa).

L-glutamine is bound at residue 52 to 54 (GES). The Nucleophile role is filled by Cys-84. Residues Arg-118 and 149-150 (IR) each bind L-glutamine. Active-site charge relay system residues include His-189 and Glu-191.

The protein belongs to the glutaminase PdxT/SNO family. In the presence of PdxS, forms a dodecamer of heterodimers. Only shows activity in the heterodimer.

The enzyme catalyses aldehydo-D-ribose 5-phosphate + D-glyceraldehyde 3-phosphate + L-glutamine = pyridoxal 5'-phosphate + L-glutamate + phosphate + 3 H2O + H(+). It catalyses the reaction L-glutamine + H2O = L-glutamate + NH4(+). The protein operates within cofactor biosynthesis; pyridoxal 5'-phosphate biosynthesis. Its function is as follows. Catalyzes the hydrolysis of glutamine to glutamate and ammonia as part of the biosynthesis of pyridoxal 5'-phosphate. The resulting ammonia molecule is channeled to the active site of PdxS. This Renibacterium salmoninarum (strain ATCC 33209 / DSM 20767 / JCM 11484 / NBRC 15589 / NCIMB 2235) protein is Pyridoxal 5'-phosphate synthase subunit PdxT.